Reading from the N-terminus, the 310-residue chain is tRNA uridine(34) hydroxylase (310 aa).

Residues 124–218 (SDPEVLLIDT…YFEEVPQEES (95 aa)) enclose the Rhodanese domain. C178 serves as the catalytic Cysteine persulfide intermediate.

Belongs to the TrhO family.

It carries out the reaction uridine(34) in tRNA + AH2 + O2 = 5-hydroxyuridine(34) in tRNA + A + H2O. Its function is as follows. Catalyzes oxygen-dependent 5-hydroxyuridine (ho5U) modification at position 34 in tRNAs. In Pseudomonas putida (strain ATCC 700007 / DSM 6899 / JCM 31910 / BCRC 17059 / LMG 24140 / F1), this protein is tRNA uridine(34) hydroxylase.